Reading from the N-terminus, the 309-residue chain is Ubiquitin-conjugating enzyme E2 32 (309 aa).

Residues 11 to 166 enclose the UBC core domain; sequence PAVKRILQEV…ERQKIIDEIH (156 aa). The active-site Glycyl thioester intermediate is the Cys-93. A helical transmembrane segment spans residues 275 to 295; that stretch reads FTWAAVGLTIAIMVLLLKKFI.

Belongs to the ubiquitin-conjugating enzyme family.

Its subcellular location is the membrane. The enzyme catalyses S-ubiquitinyl-[E1 ubiquitin-activating enzyme]-L-cysteine + [E2 ubiquitin-conjugating enzyme]-L-cysteine = [E1 ubiquitin-activating enzyme]-L-cysteine + S-ubiquitinyl-[E2 ubiquitin-conjugating enzyme]-L-cysteine.. Its pathway is protein modification; protein ubiquitination. In terms of biological role, accepts the ubiquitin from the E1 complex and catalyzes its covalent attachment to other proteins. The protein is Ubiquitin-conjugating enzyme E2 32 (UBC32) of Arabidopsis thaliana (Mouse-ear cress).